The primary structure comprises 52 residues: Insulin (52 aa).

Intrachain disulfides connect Cys9-Cys38, Cys21-Cys51, and Cys37-Cys42.

Belongs to the insulin family. In terms of assembly, heterodimer of a B chain and an A chain linked by two disulfide bonds.

The protein localises to the secreted. Its function is as follows. Insulin decreases blood glucose concentration. It increases cell permeability to monosaccharides, amino acids and fatty acids. It accelerates glycolysis, the pentose phosphate cycle, and glycogen synthesis in liver. The sequence is that of Insulin (ins) from Piaractus mesopotamicus (Small-scaled pacu).